The following is a 273-amino-acid chain: NADPH-dependent 7-cyano-7-deazaguanine reductase (273 aa).

Position 81-83 (81-83 (VES)) interacts with substrate. An NADPH-binding site is contributed by 83–84 (SK). The active-site Thioimide intermediate is C179. D186 acts as the Proton donor in catalysis. Residue 218–219 (AE) coordinates substrate. An NADPH-binding site is contributed by 247–248 (RG).

Belongs to the GTP cyclohydrolase I family. QueF type 2 subfamily. Homodimer.

The protein resides in the cytoplasm. The enzyme catalyses 7-aminomethyl-7-carbaguanine + 2 NADP(+) = 7-cyano-7-deazaguanine + 2 NADPH + 3 H(+). The protein operates within tRNA modification; tRNA-queuosine biosynthesis. In terms of biological role, catalyzes the NADPH-dependent reduction of 7-cyano-7-deazaguanine (preQ0) to 7-aminomethyl-7-deazaguanine (preQ1). The sequence is that of NADPH-dependent 7-cyano-7-deazaguanine reductase from Rickettsia felis (strain ATCC VR-1525 / URRWXCal2) (Rickettsia azadi).